The chain runs to 422 residues: MNQCAKDITHEASSIPIDLQERYSHWKKNTKLLYDYLNTNSTKWPSLTCQFFPDLDTTSDEHRILLSSFTSSQKPEDETIYISKISTLGHIKWSSLNNFDMDEMEFKPENSTRFPSKHLVNDISIFFPNGECNRARYLPQNPDIIAGASSDGAIYIFDRTKHGSTRIRQSKISHPFETKLFGSHGVIQDVEAMDTSSADINEATSLAWNLQQEALLLSSHSNGQVQVWDIKQYSHENPIIDLPLVSINSDGTAVNDVTWMPTHDSLFAACTEGNAVSLLDLRTKKEKLQSNREKHDGGVNSCRFNYKNSLILASADSNGRLNLWDIRNMNKSPIATMEHGTSVSTLEWSPNFDTVLATAGQEDGLVKLWDTSCEETIFTHGGHMLGVNDISWDAHDPWLMCSVANDNSVHIWKPAGNLVGHS.

WD repeat units follow at residues Phe127–Asp158, Ala198–Pro238, Ser249–Gln289, Lys294–Ile334, Glu338–Thr379, and Gly382–His421.

The protein belongs to the WD repeat RBAP46/RBAP48/MSI1 family. Component of chromatin assembly factor 1 (CAF-1), composed of MSI1/p50, CAC2/p60 and CAC1/p90. Interacts with protein kinase NPR1. Interacts with RTT106.

It is found in the cytoplasm. Its subcellular location is the nucleus. Functionally, acts as a component of the histone chaperone complex chromatin assembly factor 1 (CAF-1), which assembles histone octamers onto DNA during replication and repair. CAF-1 performs the first step of the nucleosome assembly process, bringing newly synthesized histones H3 and H4 to replicating DNA; histones H2A/H2B can bind to this chromatin precursor subsequent to DNA replication to complete the histone octamer. Plays a role in the maintenance of heterochromatin. Independently, MSI1 is involved in regulation of the RAS/cAMP pathway via sequestration of NPR1. This Saccharomyces cerevisiae (strain ATCC 204508 / S288c) (Baker's yeast) protein is Histone-binding protein MSI1 (MSI1).